Reading from the N-terminus, the 142-residue chain is DNA polymerase III subunit chi (142 aa).

It belongs to the DNA polymerase III chi/HolC chain family. In terms of assembly, DNA polymerase III contains a core (composed of alpha, epsilon and theta chains) that associates with a tau subunit. This core dimerizes to form the POLIII' complex. PolIII' associates with the gamma complex (composed of gamma, delta, delta', psi and chi chains) and with the beta chain to form the complete DNA polymerase III complex. Interacts directly with the psi subunit (holD). The only subunit of the DNA polymerase III holoenzyme known to interact with single-stranded DNA binding protein (SSB).

It catalyses the reaction DNA(n) + a 2'-deoxyribonucleoside 5'-triphosphate = DNA(n+1) + diphosphate. Part of the beta sliding clamp loading complex, which hydrolyzes ATP to load the beta clamp onto primed DNA to form the DNA replication pre-initiation complex. DNA polymerase III is a complex, multichain enzyme responsible for most of the replicative synthesis in bacteria. This DNA polymerase also exhibits 3' to 5' exonuclease activity. In Pseudomonas aeruginosa (strain ATCC 15692 / DSM 22644 / CIP 104116 / JCM 14847 / LMG 12228 / 1C / PRS 101 / PAO1), this protein is DNA polymerase III subunit chi.